The primary structure comprises 382 residues: Alkaline serine protease ver112 (382 aa).

The first 15 residues, Met-1–Ala-15, serve as a signal peptide directing secretion. The propeptide occupies Ala-16 to Asn-102. Positions Ser-56 to Phe-99 constitute an Inhibitor I9 domain. The Peptidase S8 domain occupies Thr-111–Thr-382. Disulfide bonds link Cys-138/Cys-227 and Cys-282/Cys-353. Residues Asp-143, His-173, and Ser-328 each act as charge relay system in the active site.

It belongs to the peptidase S8 family.

The protein localises to the secreted. Its activity is regulated as follows. Inhibited by phenylmethylsulfonyl fluoride (PMSF). Serine protease which can degrade the nematode cuticle. In Corniculantispora psalliotae (Lecanicillium psalliotae), this protein is Alkaline serine protease ver112.